Here is a 141-residue protein sequence, read N- to C-terminus: Hemoglobin subunit alpha (141 aa).

The Globin domain maps to 1 to 141; sequence VLSPADKTNV…VSTVLTSKYR (141 aa). The residue at position 3 (Ser-3) is a Phosphoserine. Lys-7 carries the N6-succinyllysine modification. Thr-8 is subject to Phosphothreonine. An N6-succinyllysine modification is found at Lys-11. Lys-16 carries the N6-acetyllysine; alternate modification. At Lys-16 the chain carries N6-succinyllysine; alternate. Position 24 is a phosphotyrosine (Tyr-24). Ser-35 is modified (phosphoserine). Position 40 is an N6-succinyllysine (Lys-40). A Phosphoserine modification is found at Ser-49. Residue His-58 coordinates O2. A heme b-binding site is contributed by His-87. Ser-102 carries the post-translational modification Phosphoserine. Phosphothreonine is present on Thr-108. At Ser-124 the chain carries Phosphoserine. Residues Thr-134 and Thr-137 each carry the phosphothreonine modification. Ser-138 is subject to Phosphoserine.

This sequence belongs to the globin family. As to quaternary structure, heterotetramer of two alpha chains and two beta chains. In terms of tissue distribution, red blood cells.

In terms of biological role, involved in oxygen transport from the lung to the various peripheral tissues. Its function is as follows. Hemopressin acts as an antagonist peptide of the cannabinoid receptor CNR1. Hemopressin-binding efficiently blocks cannabinoid receptor CNR1 and subsequent signaling. The polypeptide is Hemoglobin subunit alpha (HBA) (Lutra lutra (European river otter)).